We begin with the raw amino-acid sequence, 631 residues long: Probable methyltransferase PMT16 (631 aa).

Over M1 to A14 the chain is Cytoplasmic. Residues N15 to W35 form a helical; Signal-anchor for type II membrane protein membrane-spanning segment. At Q36–S631 the chain is on the lumenal side. N-linked (GlcNAc...) asparagine glycans are attached at residues N61, N230, and N626.

The protein belongs to the methyltransferase superfamily.

Its subcellular location is the endoplasmic reticulum membrane. The sequence is that of Probable methyltransferase PMT16 from Arabidopsis thaliana (Mouse-ear cress).